Here is a 109-residue protein sequence, read N- to C-terminus: Putative double-stranded DNA mimic protein Ent638_2296 (109 aa).

Belongs to the putative dsDNA mimic protein family.

Functionally, may act as a double-stranded DNA (dsDNA) mimic. Probably regulates the activity of a dsDNA-binding protein. The chain is Putative double-stranded DNA mimic protein Ent638_2296 from Enterobacter sp. (strain 638).